Reading from the N-terminus, the 295-residue chain is Light-independent protochlorophyllide reductase iron-sulfur ATP-binding protein (295 aa).

Residues 39-44 and lysine 68 each bind ATP; that span reads GIGKST. Position 43 (serine 43) interacts with Mg(2+). Cysteine 124 and cysteine 158 together coordinate [4Fe-4S] cluster. 209–210 is an ATP binding site; the sequence is NR.

Belongs to the NifH/BchL/ChlL family. As to quaternary structure, homodimer. Protochlorophyllide reductase is composed of three subunits; ChlL, ChlN and ChlB. It depends on [4Fe-4S] cluster as a cofactor.

The enzyme catalyses chlorophyllide a + oxidized 2[4Fe-4S]-[ferredoxin] + 2 ADP + 2 phosphate = protochlorophyllide a + reduced 2[4Fe-4S]-[ferredoxin] + 2 ATP + 2 H2O. It functions in the pathway porphyrin-containing compound metabolism; chlorophyll biosynthesis (light-independent). Its function is as follows. Component of the dark-operative protochlorophyllide reductase (DPOR) that uses Mg-ATP and reduced ferredoxin to reduce ring D of protochlorophyllide (Pchlide) to form chlorophyllide a (Chlide). This reaction is light-independent. The L component serves as a unique electron donor to the NB-component of the complex, and binds Mg-ATP. This Prochlorococcus marinus (strain MIT 9312) protein is Light-independent protochlorophyllide reductase iron-sulfur ATP-binding protein.